A 417-amino-acid chain; its full sequence is Phosphoglycerate kinase 1 (417 aa).

Position 2 is an N-acetylserine (Ser2). Phosphoserine occurs at positions 2 and 4. Lys6 bears the N6-succinyllysine mark. Lys11 carries the post-translational modification N6-acetyllysine. (2R)-3-phosphoglycerate is bound by residues Val23, Asp24, Phe25, Asn26, Gln38, and Arg39. The tract at residues 38 to 43 (QRIKAA) is mitochondrial targeting region exposed following cis-trans isomerization by PIN1 and recognized by the TOM complex for mitochondrial translocation of the protein. Lys48 carries the N6-acetyllysine; alternate modification. N6-succinyllysine; alternate is present on Lys48. Residues Ser62, His63, Gly65, and Arg66 each coordinate (2R)-3-phosphoglycerate. Lys75 carries the N6-acetyllysine modification. Position 76 is a phosphotyrosine (Tyr76). Residues Lys86 and Lys91 each carry the N6-acetyllysine modification. Residue Lys97 is modified to N6-acetyllysine; alternate. Residue Lys97 is modified to N6-(2-hydroxyisobutyryl)lysine; alternate. (2R)-3-phosphoglycerate is bound by residues Leu122 and Arg123. Lys131 carries the post-translational modification N6-acetyllysine; alternate. Lys131 bears the N6-malonyllysine; alternate mark. Lys146 is subject to N6-acetyllysine. Positions 170 and 171 each coordinate (2R)-3-phosphoglycerate. Lys191 carries the N6-succinyllysine modification. A Phosphotyrosine modification is found at Tyr196. The residue at position 199 (Lys199) is an N6-acetyllysine. Residue Ser203 is modified to Phosphoserine. Gly214 lines the ADP pocket. CDP is bound at residue Gly214. Positions 215 and 216 each coordinate AMP. Residue Ala215 participates in ATP binding. Ala215 is a Mg(2+) binding site. Lys216 is subject to N6-(2-hydroxyisobutyryl)lysine. Residues Ala218 and Asp219 each coordinate Mg(2+). Asp219 contacts CDP. Lys220 is a binding site for AMP. Residue Lys220 coordinates ATP. Lys220 bears the N6-(2-hydroxyisobutyryl)lysine mark. Position 238 (Gly238) interacts with ADP. Gly238 contributes to the CDP binding site. Gly239 is a binding site for AMP. Position 239 (Gly239) interacts with ATP. N6-acetyllysine occurs at positions 267 and 291. Residue Gly313 participates in AMP binding. Position 313 (Gly313) interacts with ATP. Residue Lys323 is modified to N6-(2-hydroxyisobutyryl)lysine. CDP contacts are provided by Gly338, Val340, and Phe343. ADP is bound at residue Phe343. Glu344 contributes to the AMP binding site. Glu344 serves as a coordination point for ATP. Lys361 is subject to N6-acetyllysine. ATP is bound by residues Asp375 and Thr376. Asp375 contacts Mg(2+).

The protein belongs to the phosphoglycerate kinase family. In terms of assembly, monomer. Interacts with kinase MAPK1/ERK2; the interaction is direct, occurs under hypoxic conditions, and promotes its interaction with PIN1. Interacts with peptidyl-prolyl cis-trans isomerase PIN1; the interaction is direct, occurs under hypoxic conditions, and targets the protein to the mitochondrion by promoting interactions with the TOM complex. Interacts with mitochondrial circRNA mcPGK1 (via its 2nd stem-loop); the interaction is direct and targets the protein to the mitochondrion by promoting interactions with the TOM complex. Interacts with pyruvate dehydrogenase kinase PDK1; the interaction is direct, occurs under hypoxic conditions and leads to PDK1-mediated inhibition of pyruvate dehydrogenase complex activity. Requires Mg(2+) as cofactor. Post-translationally, phosphorylated at Ser-203 by MAPK1/ERK2 under hypoxic conditions, which promotes its mitochondrial targeting.

It localises to the cytoplasm. It is found in the cytosol. The protein resides in the mitochondrion matrix. It carries out the reaction (2R)-3-phosphoglycerate + ATP = (2R)-3-phospho-glyceroyl phosphate + ADP. The catalysed reaction is L-seryl-[protein] + ATP = O-phospho-L-seryl-[protein] + ADP + H(+). The protein operates within carbohydrate degradation; glycolysis; pyruvate from D-glyceraldehyde 3-phosphate: step 2/5. In terms of biological role, catalyzes one of the two ATP producing reactions in the glycolytic pathway via the reversible conversion of 1,3-diphosphoglycerate to 3-phosphoglycerate. Both L- and D- forms of purine and pyrimidine nucleotides can be used as substrates, but the activity is much lower on pyrimidines. In addition to its role as a glycolytic enzyme, it seems that PGK-1 acts as a polymerase alpha cofactor protein (primer recognition protein). Acts as a protein kinase when localized to the mitochondrion where it phosphorylates pyruvate dehydrogenase kinase PDK1 to inhibit pyruvate dehydrogenase complex activity and suppress the formation of acetyl-coenzyme A from pyruvate, and consequently inhibit oxidative phosphorylation and promote glycolysis. May play a role in sperm motility. The polypeptide is Phosphoglycerate kinase 1 (PGK1) (Cricetulus griseus (Chinese hamster)).